The sequence spans 385 residues: MSWQQRIDRALDERRAAEAFRRRLPVTHGAGRWLEREGERWLNFSSNDYLGLSQHPAIIAAWQQGATRYGVGAGGSGHVSGYSEAHRALEEALADWLGYPRALLFISGFAANQALIAALAEKDDRIVADRLSHASLLEAASLSPAQLRRFTHNDPQQLAQLLAKPLAGEQLAVTEGIFSMDGDSAPLAAIHAATQAAGAVLLVDDAHGVGVIGDEGRGSCAAQAVRPELLVVTFGKAFGVSGAAVLCDEAMADYLLQFARHLIYSTAMPPAQAVALSAALRIIRSDEGQQRRDILAARIRQFREGMGEVSLGLTDSVSAIQPLIVGDNARALNLACRLRDAGCWATAIRPPTVPVGSARLRLTLTAAHHTEDINRLLEVLHGHSE.

Arginine 21 contributes to the substrate binding site. Residue glycine 108 to phenylalanine 109 participates in pyridoxal 5'-phosphate binding. Histidine 133 contributes to the substrate binding site. Residues serine 179, histidine 207, and threonine 233 each contribute to the pyridoxal 5'-phosphate site. Lysine 236 is subject to N6-(pyridoxal phosphate)lysine. Substrate is bound at residue threonine 352.

It belongs to the class-II pyridoxal-phosphate-dependent aminotransferase family. BioF subfamily. As to quaternary structure, homodimer. The cofactor is pyridoxal 5'-phosphate.

The enzyme catalyses 6-carboxyhexanoyl-[ACP] + L-alanine + H(+) = (8S)-8-amino-7-oxononanoate + holo-[ACP] + CO2. Its pathway is cofactor biosynthesis; biotin biosynthesis. Catalyzes the decarboxylative condensation of pimeloyl-[acyl-carrier protein] and L-alanine to produce 8-amino-7-oxononanoate (AON), [acyl-carrier protein], and carbon dioxide. The chain is 8-amino-7-oxononanoate synthase from Klebsiella pneumoniae subsp. pneumoniae (strain ATCC 700721 / MGH 78578).